The following is a 565-amino-acid chain: Mediator of RNA polymerase II transcription subunit 1 (565 aa).

The interval 141–170 (SGNNLGSGNGTNGSSLTNKTDKKSVSSGNG) is disordered.

It belongs to the Mediator complex subunit 1 family. Component of the Mediator complex.

The protein localises to the nucleus. Component of the Mediator complex, a coactivator involved in the regulated transcription of nearly all RNA polymerase II-dependent genes. Mediator functions as a bridge to convey information from gene-specific regulatory proteins to the basal RNA polymerase II transcription machinery. Mediator is recruited to promoters by direct interactions with regulatory proteins and serves as a scaffold for the assembly of a functional preinitiation complex with RNA polymerase II and the general transcription factors. In Candida glabrata (strain ATCC 2001 / BCRC 20586 / JCM 3761 / NBRC 0622 / NRRL Y-65 / CBS 138) (Yeast), this protein is Mediator of RNA polymerase II transcription subunit 1 (MED1).